Here is a 190-residue protein sequence, read N- to C-terminus: GTP cyclohydrolase 1 (190 aa).

Cys-79, His-82, and Cys-151 together coordinate Zn(2+).

The protein belongs to the GTP cyclohydrolase I family. Toroid-shaped homodecamer, composed of two pentamers of five dimers.

It catalyses the reaction GTP + H2O = 7,8-dihydroneopterin 3'-triphosphate + formate + H(+). The protein operates within cofactor biosynthesis; 7,8-dihydroneopterin triphosphate biosynthesis; 7,8-dihydroneopterin triphosphate from GTP: step 1/1. This Clostridioides difficile (strain 630) (Peptoclostridium difficile) protein is GTP cyclohydrolase 1.